The following is a 338-amino-acid chain: 1-aminocyclopropane-1-carboxylate deaminase (338 aa).

N6-(pyridoxal phosphate)lysine is present on K51. The active-site Nucleophile is the S78.

Belongs to the ACC deaminase/D-cysteine desulfhydrase family. As to quaternary structure, homotrimer. The cofactor is pyridoxal 5'-phosphate.

It catalyses the reaction 1-aminocyclopropane-1-carboxylate + H2O = 2-oxobutanoate + NH4(+). Catalyzes a cyclopropane ring-opening reaction, the irreversible conversion of 1-aminocyclopropane-1-carboxylate (ACC) to ammonia and alpha-ketobutyrate. Allows growth on ACC as a nitrogen source. In Burkholderia pseudomallei (strain 1710b), this protein is 1-aminocyclopropane-1-carboxylate deaminase.